The chain runs to 634 residues: Chaperone protein HtpG (634 aa).

Residues 1-344 (MNETVANNKE…SNDLPLNVSR (344 aa)) are a; substrate-binding. The b stretch occupies residues 345–561 (EILQDNKVTQ…DFEMGTQMAK (217 aa)). The tract at residues 562 to 634 (LLAAAGQAVP…TAINSLLTKG (73 aa)) is c.

It belongs to the heat shock protein 90 family. As to quaternary structure, homodimer.

It localises to the cytoplasm. Its function is as follows. Molecular chaperone. Has ATPase activity. The polypeptide is Chaperone protein HtpG (Vibrio vulnificus (strain YJ016)).